A 218-amino-acid chain; its full sequence is Glutathione S-transferase Mu 1 (218 aa).

In terms of domain architecture, GST N-terminal spans Pro-2 to Gly-88. Residues Tyr-7–Trp-8, Arg-43–Trp-46, Lys-50, Asn-59–Leu-60, and Gln-72–Ser-73 contribute to the glutathione site. The region spanning Thr-90–Leu-208 is the GST C-terminal domain. Residue Tyr-116 participates in substrate binding.

The protein belongs to the GST superfamily. Mu family. Homodimer.

The protein resides in the cytoplasm. It catalyses the reaction RX + glutathione = an S-substituted glutathione + a halide anion + H(+). It carries out the reaction prostaglandin A2 + glutathione = prostaglandin A2-S-(R)-glutathione. The catalysed reaction is prostaglandin J2 + glutathione = prostaglandin J2-S-(R)-glutathione. The enzyme catalyses prostaglandin J2 + glutathione = prostaglandin J2-S-(S)-glutathione. It catalyses the reaction prostaglandin A2 + glutathione = prostaglandin A2-S-(S)-glutathione. It carries out the reaction 11(S)-hydroxy-14(S),15(S)-epoxy-(5Z,8Z,12E)-eicosatrienoate + glutathione = (11S,15S)-dihydroxy-14(R)-S-glutathionyl-(5Z,8Z,12E)-eicosatrienoate. Its function is as follows. Conjugation of reduced glutathione to a wide number of exogenous and endogenous hydrophobic electrophiles. Protects against the thiol-mediated metal-catalyzed oxidative inactivation of enzymes. Involved in the formation of glutathione conjugates of both prostaglandin A2 (PGA2) and prostaglandin J2 (PGJ2). Participates in the formation of novel hepoxilin regioisomers. This is Glutathione S-transferase Mu 1 (GSTM1) from Bos taurus (Bovine).